Consider the following 415-residue polypeptide: FXa-directed anticoagulant (415 aa).

The first 17 residues, 1–17, serve as a signal peptide directing secretion; it reads MYLKIVILVTFPLVCFT. N-linked (GlcNAc...) asparagine glycosylation is found at Asn117, Asn166, Asn216, and Asn320.

This sequence belongs to the serpin family. As to quaternary structure, (Microbial infection) Interacts with Zika virus envelope protein E and Zika virus-like particles; the interaction does not affect Zika virus replication in human endothelial cells and keratinocytes. Post-translationally, the N-terminus is blocked. Female salivary gland (at protein level). Not detected in female carcass without head and salivary glands. Not detected in male tissues.

The protein resides in the secreted. Its function is as follows. Anticoagulant serpin-type protein inhibiting host coagulation factor Xa (F10). Does not inhibit host thrombin (F2) and trypsin. Functionally, (Microbial infection) Does not affect Zika virus replication in human endothelial cells and keratinocytes. This chain is FXa-directed anticoagulant, found in Aedes aegypti (Yellowfever mosquito).